A 123-amino-acid chain; its full sequence is Large ribosomal subunit protein uL14 (123 aa).

Belongs to the universal ribosomal protein uL14 family. In terms of assembly, part of the 50S ribosomal subunit. Forms a cluster with proteins L3 and L19. In the 70S ribosome, L14 and L19 interact and together make contacts with the 16S rRNA in bridges B5 and B8.

In terms of biological role, binds to 23S rRNA. Forms part of two intersubunit bridges in the 70S ribosome. The protein is Large ribosomal subunit protein uL14 of Tropheryma whipplei (strain TW08/27) (Whipple's bacillus).